Reading from the N-terminus, the 280-residue chain is Protease HtpX (280 aa).

Helical transmembrane passes span threonine 7–glycine 26 and glycine 30–serine 49. Histidine 129 provides a ligand contact to Zn(2+). Residue glutamate 130 is part of the active site. Histidine 133 lines the Zn(2+) pocket. The next 2 membrane-spanning stretches (helical) occupy residues alanine 146–glycine 166 and valine 178–isoleucine 198. Glutamate 203 serves as a coordination point for Zn(2+).

The protein belongs to the peptidase M48B family. Zn(2+) serves as cofactor.

The protein localises to the cell inner membrane. This chain is Protease HtpX, found in Legionella pneumophila (strain Lens).